The following is a 194-amino-acid chain: RNA pyrophosphohydrolase (194 aa).

The Nudix hydrolase domain maps to 6-149 (GFRPNVGIIL…KRDVYQRALQ (144 aa)). Residues 38-59 (GGIKFGETPEQAMYRELEEEVG) carry the Nudix box motif. A disordered region spans residues 158–194 (PTQHVPPQHNTARYLRQTHASRKPDEPSTEKTKPDNE). Positions 179 to 194 (RKPDEPSTEKTKPDNE) are enriched in basic and acidic residues.

It belongs to the Nudix hydrolase family. RppH subfamily. Requires a divalent metal cation as cofactor.

Functionally, accelerates the degradation of transcripts by removing pyrophosphate from the 5'-end of triphosphorylated RNA, leading to a more labile monophosphorylated state that can stimulate subsequent ribonuclease cleavage. This is RNA pyrophosphohydrolase from Janthinobacterium sp. (strain Marseille) (Minibacterium massiliensis).